We begin with the raw amino-acid sequence, 213 residues long: ER lumen protein-retaining receptor erd-2.2 (213 aa).

The Lumenal portion of the chain corresponds to 1–2; the sequence is MN. Residues 3–21 form a helical membrane-spanning segment; that stretch reads IFRISADMSHLLAIIILLL. Residues 22 to 35 are Cytoplasmic-facing; the sequence is KIWKSRSCSGISAR. Residues 36 to 53 traverse the membrane as a helical segment; sequence SQILFALVFTARYLDLFS. Residues 54–61 are Lumenal-facing; the sequence is TYISLYNT. A helical membrane pass occupies residues 62 to 80; it reads TMKITFLAATYATVYLMFF. Over 81 to 96 the chain is Cytoplasmic; sequence KFRSTYMRESDTFRVE. The chain crosses the membrane as a helical span at residues 97-110; it reads LLIVPAAILALLIN. The Lumenal portion of the chain corresponds to 111 to 117; the sequence is HDFAPFE. A helical membrane pass occupies residues 118 to 137; the sequence is LLWTFSIYLEAVAILPQLFL. The Cytoplasmic portion of the chain corresponds to 138-149; sequence LQSTGSAEVITA. A helical membrane pass occupies residues 150–168; the sequence is HYLFALGSYRALYIFNWIY. Topologically, residues 169–178 are lumenal; that stretch reads RYYTEDYFDP. The helical transmembrane segment at 179 to 199 threads the bilayer; it reads IVVVAGIVQTVLYADFFYLYV. At 200 to 213 the chain is on the cytoplasmic side; that stretch reads TRVVQTRKGMELPI.

This sequence belongs to the ERD2 family.

It is found in the endoplasmic reticulum membrane. Its function is as follows. Required for the retention of luminal endoplasmic reticulum proteins. Determines the specificity of the luminal ER protein retention system. Also required for normal vesicular traffic through the Golgi. This is ER lumen protein-retaining receptor erd-2.2 from Caenorhabditis elegans.